The chain runs to 740 residues: E3 ubiquitin-protein ligase WAV3 (740 aa).

Positions 14–105 are disordered; the sequence is PRNSDAAAPD…AISNPSSPRS (92 aa). The span at 49–67 shows a compositional bias: low complexity; the sequence is SGGSNPSTPRSTSSPSLRC. The span at 71–90 shows a compositional bias: polar residues; the sequence is DAQTPTAEQTSTPRSATKSP. The segment at 122–167 adopts an RING-type; atypical zinc-finger fold; sequence CGICLNSVKTGQGTAKYTAECSHAFHFPCIADYVRKQGKLVCPVCN. The VWFA domain occupies 332–476; that stretch reads DLVVVVDVGG…IPVTEHGFGE (145 aa). A disordered region spans residues 677 to 709; the sequence is QSQHQQQHNQRRRGSERETTTTMTLMDENGEPL.

Interacts with SINAT1, SINAT2, SINAT3, SINAT4, SINAT5, TOR1/SPR2 and FIP2. In terms of tissue distribution, expressed in root tips and leaf primordia.

The enzyme catalyses S-ubiquitinyl-[E2 ubiquitin-conjugating enzyme]-L-cysteine + [acceptor protein]-L-lysine = [E2 ubiquitin-conjugating enzyme]-L-cysteine + N(6)-ubiquitinyl-[acceptor protein]-L-lysine.. In terms of biological role, E3 ubiquitin-protein ligase involved in the regulation of root growth. Acts as a positive regulator of root gravitropism. Possesses E3 protein ligase activity in vitro. This Arabidopsis thaliana (Mouse-ear cress) protein is E3 ubiquitin-protein ligase WAV3.